The following is a 448-amino-acid chain: Beclin-1 (448 aa).

At Met-1 the chain carries N-acetylmethionine. A phosphoserine mark is found at Ser-14 and Ser-29. 3 positions are modified to phosphoserine; by AMPK: Ser-88, Ser-91, and Ser-94. Residues 106-125 (TMENLSRRLKVTGDLFDIMS) carry the BH3 motif. Residues 110–157 (LSRRLKVTGDLFDIMSGQTDVDHPLCEECTDTLLDQLDTQLNVTENEC) form an interaction with BCL2 and BCL2L1 region. At Thr-117 the chain carries Phosphothreonine; by DAPK1. Residues 140 to 267 (DTLLDQLDTQ…QLDKLKKTNV (128 aa)) adopt a coiled-coil conformation. The interval 243 to 448 (DELKSVENQM…AWVSSQFYNK (206 aa)) is evolutionary conserved domain (ECD). Glycyl lysine isopeptide (Lys-Gly) (interchain with G-Cter in ubiquitin) cross-links involve residues Lys-400 and Lys-435. A required for membrane-association region spans residues 423–448 (WTKALKFMLTNLKWGLAWVSSQFYNK).

The protein belongs to the beclin family. In terms of assembly, a homodimeric form is proposed to exist; this metastable form readily transits to ATG14- or UVRAG-containing complexes with BECN1:UVRAG being more stable than BECN1:ATG14. Component of the PI3K (PI3KC3/PI3K-III/class III phosphatidylinositol 3-kinase) complex the core of which is composed of the catalytic subunit PIK3C3, the regulatory subunit PIK3R4 and BECN1 associating with additional regulatory/auxiliary subunits to form alternative complex forms. Alternative complex forms containing a fourth regulatory subunit in a mutually exclusive manner are PI3K complex I (PI3KC3-C1) containing ATG14, and PI3K complex II (PI3KC3-C2) containing UVRAG. PI3KC3-C1 displays a V-shaped architecture with PIK3R4 serving as a bridge between PIK3C3 and the ATG14:BECN1 subcomplex. Both, PI3KC3-C1 and PI3KC3-C2, can associate with further regulatory subunits, such as RUBCN, SH3GLB1/Bif-1 and AMBRA1. PI3KC3-C1 probably associates with PIK3CB. Forms a complex with PPP2CA and AMBRA1; AMBRA1 and BECN1 components of the complex regulate MYC stability via different pathways. Component of the complex, at least composed of LRPPRC, BECN1 and BCL2; the interactions prevent BECN1 from forming an autophagy-inducing complex with PIK3C3. Interacts with AMBRA1, GOPC, GRID2. Interacts with BCL2 and BCL2L1 isoform Bcl-X(L); the interaction inhibits BECN1 function in promoting autophagy by interfering with the formation of the PI3K complex. Interacts with cytosolic HMGB1; inhibits the interaction of BECN1 and BCL2 leading to promotion of autophagy. Interacts with USP10, USP13, VMP1, DAPK1, RAB39A. Interacts with the poly-Gln domain of ATXN3; the interaction causes deubiquitination at Lys-400 and stabilizes BECN1. Interacts with SLAMF1. Interacts with TRIM5; the interaction causes activation of BECN1 by causing its dissociation from its inhibitors BCL2 and TAB2. Interacts with active ULK1 (phosphorylated on 'Ser-317') and MEFV simultaneously. Interacts with WDR81 and WDR91; negatively regulates the PI3 kinase/PI3K activity associated with endosomal membranes. Interacts with LAPTM4B; competes with EGFR for LAPTM4B binding; regulates EGFR activity. Interacts with TRIM50. Interacts with TRIM16. Interacts with ATG14; this interaction is increased in the absence of TMEM39A. Interacts with WASHC1; preventing interaction with AMBRA1 and the DCX(AMBRA1) complex and subsequent ubiquitination. Interacts with TRIM17. Interacts with BCL2L10/BCL-B (via BH1 domain). Interacts with SH3BGRL. Interacts with IRGM; enhancing BECN1-interacting partners and influencing the composition of the BECN1 complex. Interacts with ARMC3. Interacts with LRPPRC. As to quaternary structure, (Microbial infection) Interacts with African swine fever virus (ASFV) apoptosis regulator Bcl-2 homolog; this interaction allows the virus to inhibit BECN1, and thus autophagy. Phosphorylation at Thr-117 by DAPK1 reduces its interaction with BCL2 and BCL2L1 and promotes induction of autophagy. In response to autophagic stimuli, phosphorylated at serine residues by AMPK in an ATG14-dependent manner, and this phosphorylation is critical for maximally efficient autophagy. In terms of processing, polyubiquitinated by NEDD4, both with 'Lys-11'- and 'Lys-63'-linkages. 'Lys-11'-linked polyubiquitination leads to degradation and is enhanced when the stabilizing interaction partner VPS34 is depleted. Deubiquitinated by USP10 and USP13, leading to stabilize the PIK3C3/VPS34-containing complexes. Polyubiquitinated at Lys-400 with 'Lys-48'-linkages. 'Lys-48'-linked polyubiquitination of Lys-400 leads to degradation. Deubiquitinated by ATXN3, leading to stabilization. Ubiquitinated at Lys-435 via 'Lys-63'-linkage by the DCX(AMBRA1) complex, thereby increasing the association between BECN1 and PIK3C3 to promote PIK3C3 activity. 'Lys-48'-linked ubiquitination by RNF216 leads to proteasomal degradation and autophagy inhibition. Post-translationally, proteolytically processed by caspases including CASP8 and CASP3; the C-terminal fragments lack autophagy-inducing capacity and are proposed to induce apoptosis. Thus the cleavage is proposed to be an determinant to switch from autophagy to apoptosis pathways affecting cellular homeostasis including viral infections and survival of tumor cells.

It localises to the cytoplasm. It is found in the golgi apparatus. The protein resides in the trans-Golgi network membrane. The protein localises to the endosome membrane. Its subcellular location is the endoplasmic reticulum membrane. It localises to the mitochondrion membrane. It is found in the cytoplasmic vesicle. The protein resides in the autophagosome. The protein localises to the mitochondrion. Its subcellular location is the nucleus. In terms of biological role, plays a central role in autophagy. Acts as a core subunit of the PI3K complex that mediates formation of phosphatidylinositol 3-phosphate; different complex forms are believed to play a role in multiple membrane trafficking pathways: PI3KC3-C1 is involved in initiation of autophagosomes and PI3KC3-C2 in maturation of autophagosomes and endocytosis. Involved in regulation of degradative endocytic trafficking and required for the abscission step in cytokinesis, probably in the context of PI3KC3-C2. Essential for the formation of PI3KC3-C2 but not PI3KC3-C1 PI3K complex forms. Involved in endocytosis. May play a role in antiviral host defense. Beclin-1-C 35 kDa localized to mitochondria can promote apoptosis; it induces the mitochondrial translocation of BAX and the release of proapoptotic factors. This is Beclin-1 (BECN1) from Sus scrofa (Pig).